Reading from the N-terminus, the 376-residue chain is Succinyl-diaminopimelate desuccinylase (376 aa).

Residue His67 coordinates Zn(2+). Asp69 is an active-site residue. Residue Asp100 coordinates Zn(2+). Glu134 (proton acceptor) is an active-site residue. Residues Glu135, Glu163, and His349 each contribute to the Zn(2+) site.

The protein belongs to the peptidase M20A family. DapE subfamily. Homodimer. It depends on Zn(2+) as a cofactor. Requires Co(2+) as cofactor.

The enzyme catalyses N-succinyl-(2S,6S)-2,6-diaminopimelate + H2O = (2S,6S)-2,6-diaminopimelate + succinate. It functions in the pathway amino-acid biosynthesis; L-lysine biosynthesis via DAP pathway; LL-2,6-diaminopimelate from (S)-tetrahydrodipicolinate (succinylase route): step 3/3. Its function is as follows. Catalyzes the hydrolysis of N-succinyl-L,L-diaminopimelic acid (SDAP), forming succinate and LL-2,6-diaminopimelate (DAP), an intermediate involved in the bacterial biosynthesis of lysine and meso-diaminopimelic acid, an essential component of bacterial cell walls. This is Succinyl-diaminopimelate desuccinylase from Pseudoalteromonas translucida (strain TAC 125).